Here is a 105-residue protein sequence, read N- to C-terminus: MSIYVGNLSYEVTQEDISNVFAEYGSVKRVVLPTDRETGRLRGFAFVEMGSDAEETAAIEGLDGAEWMGRDLKVNKAKPKEDRGSFGGGNRGGYGGGGGGGRSRY.

The region spanning 2-79 is the RRM domain; it reads SIYVGNLSYE…RDLKVNKAKP (78 aa). Residues 75-84 are compositionally biased toward basic and acidic residues; it reads NKAKPKEDRG. The interval 75–105 is disordered; sequence NKAKPKEDRGSFGGGNRGGYGGGGGGGRSRY. The segment covering 85 to 105 has biased composition (gly residues); the sequence is SFGGGNRGGYGGGGGGGRSRY.

The chain is Putative RNA-binding protein RbpF (rbpF) from Nostoc sp. (strain PCC 7120 / SAG 25.82 / UTEX 2576).